The chain runs to 447 residues: MREVISINVGQAGCQIGNACWELYSLEHGIKPDGHLEDGLSKPKGGEEGFSTFFHETGYGKFVPRAIYVDLEPNVIDEVRNGPYKDLFHPEQLISGKEDAANNYARGHYTVGREILGDVLDRIRKLADQCDGLQGFLFTHSLGGGTGSGLGSLLLEELSAEYGKKSKLEFAVYPAPQVSTSVVEPYNTVLTTHTTLEHADCTFMVDNEAIYDMCKRNLDIPRPSFANLNNLIAQVVSSVTASLRFDGSLNVDLNEFQTNLVPYPRIHFPLVSYSPVLSKSKAFHESNSVSEITNACFEPGNQMVKCDPRDGKYMATCLLYRGDVVTRDVQRAVEQVKNKKTVQLVDWCPTGFKIGICYEPPTATPNSQLATVDRAVCMLSNTTSIAEAWKRIDRKFDLMYAKRAFVHWYVGEGMEEGEFTEAREDLAALERDYIEVGADSYAEEEEF.

Positions 11, 72, 141, 145, 146, 180, 207, and 229 each coordinate GTP. Residue Glu72 coordinates Mg(2+). The active site involves Glu255.

It belongs to the tubulin family. In terms of assembly, dimer of alpha and beta chains. A typical microtubule is a hollow water-filled tube with an outer diameter of 25 nm and an inner diameter of 15 nM. Alpha-beta heterodimers associate head-to-tail to form protofilaments running lengthwise along the microtubule wall with the beta-tubulin subunit facing the microtubule plus end conferring a structural polarity. Microtubules usually have 13 protofilaments but different protofilament numbers can be found in some organisms and specialized cells. The cofactor is Mg(2+).

It is found in the cytoplasm. It localises to the cytoskeleton. It catalyses the reaction GTP + H2O = GDP + phosphate + H(+). Its function is as follows. Tubulin is the major constituent of microtubules, a cylinder consisting of laterally associated linear protofilaments composed of alpha- and beta-tubulin heterodimers. Microtubules grow by the addition of GTP-tubulin dimers to the microtubule end, where a stabilizing cap forms. Below the cap, tubulin dimers are in GDP-bound state, owing to GTPase activity of alpha-tubulin. The protein is Tubulin alpha-1 chain (TUB1) of Saccharomyces cerevisiae (strain ATCC 204508 / S288c) (Baker's yeast).